The following is a 358-amino-acid chain: Alanine racemase (358 aa).

The active-site Proton acceptor; specific for D-alanine is Lys35. N6-(pyridoxal phosphate)lysine is present on Lys35. Residue Arg130 coordinates substrate. Tyr255 serves as the catalytic Proton acceptor; specific for L-alanine. Residue Met303 coordinates substrate.

It belongs to the alanine racemase family. Pyridoxal 5'-phosphate is required as a cofactor.

It catalyses the reaction L-alanine = D-alanine. It participates in amino-acid biosynthesis; D-alanine biosynthesis; D-alanine from L-alanine: step 1/1. Functionally, catalyzes the interconversion of L-alanine and D-alanine. May also act on other amino acids. The chain is Alanine racemase (alr) from Shewanella baltica (strain OS155 / ATCC BAA-1091).